We begin with the raw amino-acid sequence, 551 residues long: Pentatricopeptide repeat-containing protein At3g13150 (551 aa).

Residues 22-67 (ATAKSAKPRSQTKSTKFPSKLKASTASVGDGGQSSNDAKDSKNSKL) are disordered. Residues 29–48 (PRSQTKSTKFPSKLKASTAS) show a composition bias toward polar residues. Residues 58–67 (DAKDSKNSKL) are compositionally biased toward basic and acidic residues. PPR repeat units lie at residues 121-155 (SEDF…NCER), 156-191 (TVKS…GITP), 192-226 (DLVT…GFEP), 227-261 (DLIS…NLSP), 262-296 (NIRS…GISP), 297-331 (DVHT…GLTP), and 332-366 (DTVT…KLLS). Disordered stretches follow at residues 409-435 (GKKK…SPDT) and 449-551 (SSSD…LLDD). The segment covering 415–435 (SSPVSSSAKTTSTPVSSSPDT) has biased composition (low complexity).

The protein belongs to the PPR family. P subfamily.

This chain is Pentatricopeptide repeat-containing protein At3g13150, found in Arabidopsis thaliana (Mouse-ear cress).